The chain runs to 200 residues: Superoxide dismutase [Mn], mitochondrial (200 aa).

Mn(2+)-binding residues include His-27, His-72, Asp-157, and His-161.

The protein belongs to the iron/manganese superoxide dismutase family. Mn(2+) is required as a cofactor.

Its subcellular location is the mitochondrion matrix. The enzyme catalyses 2 superoxide + 2 H(+) = H2O2 + O2. Destroys superoxide anion radicals which are normally produced within the cells and which are toxic to biological systems. The protein is Superoxide dismutase [Mn], mitochondrial (sod) of Agaricus bisporus (White button mushroom).